The chain runs to 188 residues: Shikimate kinase (188 aa).

21 to 26 (GAGKTT) is a binding site for ATP. Mg(2+) is bound at residue threonine 25. Residues aspartate 43, arginine 67, and glycine 90 each contribute to the substrate site. Arginine 130 is a binding site for ATP. Arginine 148 lines the substrate pocket.

The protein belongs to the shikimate kinase family. Monomer. The cofactor is Mg(2+).

Its subcellular location is the cytoplasm. The enzyme catalyses shikimate + ATP = 3-phosphoshikimate + ADP + H(+). The protein operates within metabolic intermediate biosynthesis; chorismate biosynthesis; chorismate from D-erythrose 4-phosphate and phosphoenolpyruvate: step 5/7. Its function is as follows. Catalyzes the specific phosphorylation of the 3-hydroxyl group of shikimic acid using ATP as a cosubstrate. The protein is Shikimate kinase of Geobacillus thermodenitrificans (strain NG80-2).